A 226-amino-acid polypeptide reads, in one-letter code: ATP-dependent dethiobiotin synthetase BioD (226 aa).

Residue 13–18 participates in ATP binding; that stretch reads DVGKTV. Thr17 is a Mg(2+) binding site. Residue Lys38 is part of the active site. Residues Asp55, 116–119, and 176–177 contribute to the ATP site; these read EGAG and NR. Positions 55 and 116 each coordinate Mg(2+).

This sequence belongs to the dethiobiotin synthetase family. As to quaternary structure, homodimer. The cofactor is Mg(2+).

It localises to the cytoplasm. It catalyses the reaction (7R,8S)-7,8-diammoniononanoate + CO2 + ATP = (4R,5S)-dethiobiotin + ADP + phosphate + 3 H(+). It participates in cofactor biosynthesis; biotin biosynthesis; biotin from 7,8-diaminononanoate: step 1/2. Catalyzes a mechanistically unusual reaction, the ATP-dependent insertion of CO2 between the N7 and N8 nitrogen atoms of 7,8-diaminopelargonic acid (DAPA, also called 7,8-diammoniononanoate) to form a ureido ring. This Aliivibrio fischeri (strain MJ11) (Vibrio fischeri) protein is ATP-dependent dethiobiotin synthetase BioD.